Here is a 234-residue protein sequence, read N- to C-terminus: NAD-dependent protein deacetylase (234 aa).

The Deacetylase sirtuin-type domain maps to Met1–Val234. The NAD(+) site is built by Ala23, Thr27, Arg35, Gln99, Ile101, Asp102, His117, Thr184, Ser185, Asn208, and Val226. Residues Ile101 and Asp102 each coordinate nicotinamide. His117 (proton acceptor) is an active-site residue.

This sequence belongs to the sirtuin family. Class U subfamily.

The protein localises to the cytoplasm. The enzyme catalyses N(6)-acetyl-L-lysyl-[protein] + NAD(+) + H2O = 2''-O-acetyl-ADP-D-ribose + nicotinamide + L-lysyl-[protein]. NAD-dependent protein deacetylase which modulates the activities of several enzymes which are inactive in their acetylated form. The polypeptide is NAD-dependent protein deacetylase (Lactiplantibacillus plantarum (strain ATCC BAA-793 / NCIMB 8826 / WCFS1) (Lactobacillus plantarum)).